We begin with the raw amino-acid sequence, 115 residues long: T cell receptor beta variable 7-4 (115 aa).

An N-terminal signal peptide occupies residues 1-21; the sequence is MGTRLLCWVVLGFLGTDHTGA. Positions 22–115 constitute an Ig-like domain; the sequence is GVSQSPRYKV…SAVYLCASSL (94 aa). Cys-42 and Cys-111 are joined by a disulfide. A disordered region spans residues 67–97; sequence YSQSDAQRDKSGRPSGRFSAERPERSVSTLK.

As to quaternary structure, alpha-beta TR is a heterodimer composed of an alpha and beta chain; disulfide-linked. The alpha-beta TR is associated with the transmembrane signaling CD3 coreceptor proteins to form the TR-CD3 (TcR or TCR). The assembly of alpha-beta TR heterodimers with CD3 occurs in the endoplasmic reticulum where a single alpha-beta TR heterodimer associates with one CD3D-CD3E heterodimer, one CD3G-CD3E heterodimer and one CD247 homodimer forming a stable octameric structure. CD3D-CD3E and CD3G-CD3E heterodimers preferentially associate with TR alpha and TR beta chains, respectively. The association of the CD247 homodimer is the last step of TcR assembly in the endoplasmic reticulum and is required for transport to the cell surface.

It is found in the cell membrane. Its function is as follows. V region of the variable domain of T cell receptor (TR) beta chain that participates in the antigen recognition. Alpha-beta T cell receptors are antigen specific receptors which are essential to the immune response and are present on the cell surface of T lymphocytes. Recognize peptide-major histocompatibility (MH) (pMH) complexes that are displayed by antigen presenting cells (APC), a prerequisite for efficient T cell adaptive immunity against pathogens. Binding of alpha-beta TR to pMH complex initiates TR-CD3 clustering on the cell surface and intracellular activation of LCK that phosphorylates the ITAM motifs of CD3G, CD3D, CD3E and CD247 enabling the recruitment of ZAP70. In turn ZAP70 phosphorylates LAT, which recruits numerous signaling molecules to form the LAT signalosome. The LAT signalosome propagates signal branching to three major signaling pathways, the calcium, the mitogen-activated protein kinase (MAPK) kinase and the nuclear factor NF-kappa-B (NF-kB) pathways, leading to the mobilization of transcription factors that are critical for gene expression and essential for T cell growth and differentiation. The T cell repertoire is generated in the thymus, by V-(D)-J rearrangement. This repertoire is then shaped by intrathymic selection events to generate a peripheral T cell pool of self-MH restricted, non-autoaggressive T cells. Post-thymic interaction of alpha-beta TR with the pMH complexes shapes TR structural and functional avidity. This chain is T cell receptor beta variable 7-4, found in Homo sapiens (Human).